The chain runs to 305 residues: Glutaminase (305 aa).

The substrate site is built by Ser61, Asn113, Glu158, Asn165, Tyr189, Tyr241, and Val259.

It belongs to the glutaminase family. As to quaternary structure, homotetramer.

The catalysed reaction is L-glutamine + H2O = L-glutamate + NH4(+). The protein is Glutaminase of Clostridium botulinum (strain ATCC 19397 / Type A).